The chain runs to 529 residues: Zinc finger protein 572 (529 aa).

Residues 1–125 form a disordered region; sequence MEQEQKLLVS…TGPAGQQNPS (125 aa). Lysine 6 participates in a covalent cross-link: Glycyl lysine isopeptide (Lys-Gly) (interchain with G-Cter in SUMO2). Residues 22–42 show a composition bias toward polar residues; it reads KNTITGDESKNNLKTVQFSNS. The span at 43-68 shows a compositional bias: basic and acidic residues; it reads KADKERASKWSRSDGPENYKDEDTKE. The span at 87–96 shows a compositional bias: polar residues; that stretch reads NDSNLGSQRN. 12 C2H2-type zinc fingers span residues 131–153, 159–181, 187–209, 215–237, 243–265, 271–293, 299–321, 327–349, 383–405, 411–433, 439–461, and 467–489; these read YKCS…QRTH, YRCS…LRTH, YQCG…ERTH, YKCP…HRSH, YECP…QRTH, YKCP…QRTH, YKCP…QRIH, YQCI…QKMH, YKCC…QRTH, YRCS…QRTH, YKCP…RRTH, and YKCT…RKIH.

It belongs to the krueppel C2H2-type zinc-finger protein family.

It is found in the nucleus. Functionally, may be involved in transcriptional regulation. The sequence is that of Zinc finger protein 572 (ZNF572) from Bos taurus (Bovine).